The primary structure comprises 175 residues: Adenine phosphoribosyltransferase (175 aa).

Belongs to the purine/pyrimidine phosphoribosyltransferase family. In terms of assembly, homodimer.

It localises to the cytoplasm. The catalysed reaction is AMP + diphosphate = 5-phospho-alpha-D-ribose 1-diphosphate + adenine. It participates in purine metabolism; AMP biosynthesis via salvage pathway; AMP from adenine: step 1/1. In terms of biological role, catalyzes a salvage reaction resulting in the formation of AMP, that is energically less costly than de novo synthesis. In Caldicellulosiruptor saccharolyticus (strain ATCC 43494 / DSM 8903 / Tp8T 6331), this protein is Adenine phosphoribosyltransferase.